We begin with the raw amino-acid sequence, 341 residues long: L-threonine 3-dehydrogenase (341 aa).

C38 contacts Zn(2+). Catalysis depends on charge relay system residues T40 and H43. Residues H63, E64, C93, C96, C99, and C107 each contribute to the Zn(2+) site. Residues I175, D195, R200, 262 to 264 (LGI), and 286 to 287 (IY) contribute to the NAD(+) site.

This sequence belongs to the zinc-containing alcohol dehydrogenase family. In terms of assembly, homotetramer. Zn(2+) serves as cofactor.

The protein resides in the cytoplasm. The catalysed reaction is L-threonine + NAD(+) = (2S)-2-amino-3-oxobutanoate + NADH + H(+). Its pathway is amino-acid degradation; L-threonine degradation via oxydo-reductase pathway; glycine from L-threonine: step 1/2. Catalyzes the NAD(+)-dependent oxidation of L-threonine to 2-amino-3-ketobutyrate. The sequence is that of L-threonine 3-dehydrogenase from Shewanella sp. (strain MR-7).